The following is a 150-amino-acid chain: Viral late gene transcription factor 2 (150 aa).

The protein belongs to the orthopoxvirus VLTF-2/OPG126 family. Interacts with the late transcription elongation factor VLTF-4/OPG110. Interacts with the late transcription factors VLTF-1/OPG093.

In terms of biological role, acts with RNA polymerase to initiate transcription from late gene promoters. This Monkeypox virus protein is Viral late gene transcription factor 2 (OPG126).